A 401-amino-acid chain; its full sequence is Probable E3 ubiquitin-protein ligase RHC2A (401 aa).

The interval 41–93 is disordered; that stretch reads TPSDSFTTTTTTQHRSPTRFPPPSSSSSTPSASMHADNSPTPTIVTRTRSNRS. A compositionally biased stretch (polar residues) spans 76–93; that stretch reads ADNSPTPTIVTRTRSNRS. Residues 201–242 form an RING-type; atypical zinc finger; the sequence is CAVCKENFVLKSSAREMPCNHIYHPDCILPWLAIRNSCPVCR.

It catalyses the reaction S-ubiquitinyl-[E2 ubiquitin-conjugating enzyme]-L-cysteine + [acceptor protein]-L-lysine = [E2 ubiquitin-conjugating enzyme]-L-cysteine + N(6)-ubiquitinyl-[acceptor protein]-L-lysine.. The protein operates within protein modification; protein ubiquitination. Probable E3 ubiquitin-protein ligase that may possess E3 ubiquitin ligase activity in vitro. The polypeptide is Probable E3 ubiquitin-protein ligase RHC2A (Arabidopsis thaliana (Mouse-ear cress)).